We begin with the raw amino-acid sequence, 352 residues long: Protein-glutamate methylesterase/protein-glutamine glutaminase 2 (352 aa).

In terms of domain architecture, Response regulatory spans 1–116; the sequence is MVVDDSAVVR…KQFLTDSADE (116 aa). The residue at position 50 (D50) is a 4-aspartylphosphate. The CheB-type methylesterase domain occupies 162-352; it reads AQTTERIVAI…MAREIVTQLQ (191 aa). Active-site residues include S174, H200, and D296.

The protein belongs to the CheB family. Post-translationally, phosphorylated by CheA. Phosphorylation of the N-terminal regulatory domain activates the methylesterase activity.

Its subcellular location is the cytoplasm. It catalyses the reaction [protein]-L-glutamate 5-O-methyl ester + H2O = L-glutamyl-[protein] + methanol + H(+). It carries out the reaction L-glutaminyl-[protein] + H2O = L-glutamyl-[protein] + NH4(+). Functionally, involved in chemotaxis. Part of a chemotaxis signal transduction system that modulates chemotaxis in response to various stimuli. Catalyzes the demethylation of specific methylglutamate residues introduced into the chemoreceptors (methyl-accepting chemotaxis proteins or MCP) by CheR. Also mediates the irreversible deamidation of specific glutamine residues to glutamic acid. The polypeptide is Protein-glutamate methylesterase/protein-glutamine glutaminase 2 (Xanthomonas campestris pv. campestris (strain ATCC 33913 / DSM 3586 / NCPPB 528 / LMG 568 / P 25)).